The following is a 207-amino-acid chain: Sodium/potassium-transporting ATPase subunit beta-1-interacting protein 1 (207 aa).

A run of 3 helical transmembrane segments spans residues 2-22 (GRCD…VAAL), 35-55 (APIL…FGTV), and 62-82 (LILY…IICF). N-linked (GlcNAc...) asparagine glycosylation is present at asparagine 100. A helical membrane pass occupies residues 147 to 167 (VVSSALQVFLALFGFVYACYV).

This sequence belongs to the NKAIN family. Interacts with atp1b1 C-terminus.

It localises to the cell membrane. In Danio rerio (Zebrafish), this protein is Sodium/potassium-transporting ATPase subunit beta-1-interacting protein 1 (nkain1).